We begin with the raw amino-acid sequence, 308 residues long: 50 kDa gamma-zein (308 aa).

A signal peptide spans methionine 1–cysteine 19. The interval cysteine 27–glutamine 159 is disordered. Residues histidine 55–valine 119 show a composition bias toward low complexity. The span at glutamine 120 to histidine 129 shows a compositional bias: basic and acidic residues. Positions glutamine 130–glutamine 159 are enriched in low complexity. Cysteine 286 carries the GPI-anchor amidated cysteine lipid modification. The propeptide at glycine 287 to asparagine 308 is removed in mature form.

This sequence belongs to the gliadin/glutenin family. Interacts with OP10 (via N-terminus).

The protein localises to the cell membrane. Its function is as follows. Zeins are major seed storage proteins. This chain is 50 kDa gamma-zein, found in Zea mays (Maize).